A 92-amino-acid polypeptide reads, in one-letter code: Acyl carrier protein (92 aa).

The region spanning 1–84 (MPSTADERQL…QIAAHLAEAV (84 aa)) is the Carrier domain. Ser44 is subject to O-(pantetheine 4'-phosphoryl)serine.

The protein belongs to the acyl carrier protein (ACP) family. Post-translationally, 4'-phosphopantetheine is transferred from CoA to a specific serine of apo-ACP by AcpS. This modification is essential for activity because fatty acids are bound in thioester linkage to the sulfhydryl of the prosthetic group.

It localises to the cytoplasm. It participates in lipid metabolism; fatty acid biosynthesis. In terms of biological role, carrier of the growing fatty acid chain in fatty acid biosynthesis. This chain is Acyl carrier protein, found in Streptomyces coelicolor (strain ATCC BAA-471 / A3(2) / M145).